The chain runs to 138 residues: Small ribosomal subunit protein uS12 (138 aa).

A disordered region spans residues 33-55 (KEHTNVSSPQKRGVCTRVGTMTP).

Belongs to the universal ribosomal protein uS12 family. In terms of assembly, part of the 30S ribosomal subunit. Contacts proteins S8 and S17. May interact with IF1 in the 30S initiation complex. Interacts with BrxC.

Functionally, with S4 and S5 plays an important role in translational accuracy. Interacts with and stabilizes bases of the 16S rRNA that are involved in tRNA selection in the A site and with the mRNA backbone. Located at the interface of the 30S and 50S subunits, it traverses the body of the 30S subunit contacting proteins on the other side and probably holding the rRNA structure together. The combined cluster of proteins S8, S12 and S17 appears to hold together the shoulder and platform of the 30S subunit. The protein is Small ribosomal subunit protein uS12 (rpsL) of Bacillus subtilis (strain 168).